The sequence spans 1458 residues: RNA-directed RNA polymerase P1 (1458 aa).

The disordered stretch occupies residues 148 to 168 (LSQDDRDEKGNDNREEEDVKN). Positions 686–894 (VGIGFATIYQ…KTVISHISGE (209 aa)) constitute a RdRp catalytic domain. Positions 971–993 (DESIENKPNRRGSKAKARSTKTN) are disordered. Over residues 979–989 (NRRGSKAKARS) the composition is skewed to basic residues.

Belongs to the reoviridae RNA-directed RNA polymerase family.

Its subcellular location is the virion. It localises to the host cytoplasm. The enzyme catalyses RNA(n) + a ribonucleoside 5'-triphosphate = RNA(n+1) + diphosphate. In terms of biological role, RNA-directed RNA polymerase that is involved in both transcription and genome replication. Together with the capping enzyme P5 and protein P7, forms an enzyme complex positioned near the channels situated at each of the five-fold vertices of the core. The chain is RNA-directed RNA polymerase P1 from Nephotettix cincticeps (Green rice leafhopper).